Here is a 119-residue protein sequence, read N- to C-terminus: Large ribosomal subunit protein uL22 (119 aa).

Belongs to the universal ribosomal protein uL22 family. As to quaternary structure, part of the 50S ribosomal subunit.

This protein binds specifically to 23S rRNA; its binding is stimulated by other ribosomal proteins, e.g. L4, L17, and L20. It is important during the early stages of 50S assembly. It makes multiple contacts with different domains of the 23S rRNA in the assembled 50S subunit and ribosome. Its function is as follows. The globular domain of the protein is located near the polypeptide exit tunnel on the outside of the subunit, while an extended beta-hairpin is found that lines the wall of the exit tunnel in the center of the 70S ribosome. This Chlorobaculum tepidum (strain ATCC 49652 / DSM 12025 / NBRC 103806 / TLS) (Chlorobium tepidum) protein is Large ribosomal subunit protein uL22.